The primary structure comprises 130 residues: Large ribosomal subunit protein bL19 (130 aa).

Belongs to the bacterial ribosomal protein bL19 family.

This protein is located at the 30S-50S ribosomal subunit interface and may play a role in the structure and function of the aminoacyl-tRNA binding site. This chain is Large ribosomal subunit protein bL19, found in Burkholderia vietnamiensis (strain G4 / LMG 22486) (Burkholderia cepacia (strain R1808)).